The sequence spans 302 residues: uncharacterized protein (302 aa).

2 disordered regions span residues 1–167 (MPCR…QSSE) and 180–199 (PSLCPSQTGTASTASPQRAS). Basic and acidic residues predominate over residues 39–54 (EESHAPSRDPRDHQGS). Composition is skewed to polar residues over residues 123–133 (LSTSSCASVSR) and 183–197 (CPSQTGTASTASPQR).

This is an uncharacterized protein from Homo sapiens (Human).